The following is a 368-amino-acid chain: Phospho-N-acetylmuramoyl-pentapeptide-transferase (368 aa).

The next 9 membrane-spanning stretches (helical) occupy residues alanine 30 to leucine 50, leucine 72 to alanine 92, valine 99 to leucine 119, leucine 135 to methionine 155, leucine 170 to serine 190, glycine 201 to alanine 221, glycine 238 to phenylalanine 258, isoleucine 265 to isoleucine 286, and lysine 345 to leucine 365.

It belongs to the glycosyltransferase 4 family. MraY subfamily. The cofactor is Mg(2+).

It is found in the cell inner membrane. The enzyme catalyses UDP-N-acetyl-alpha-D-muramoyl-L-alanyl-gamma-D-glutamyl-meso-2,6-diaminopimeloyl-D-alanyl-D-alanine + di-trans,octa-cis-undecaprenyl phosphate = di-trans,octa-cis-undecaprenyl diphospho-N-acetyl-alpha-D-muramoyl-L-alanyl-D-glutamyl-meso-2,6-diaminopimeloyl-D-alanyl-D-alanine + UMP. It participates in cell wall biogenesis; peptidoglycan biosynthesis. In terms of biological role, catalyzes the initial step of the lipid cycle reactions in the biosynthesis of the cell wall peptidoglycan: transfers peptidoglycan precursor phospho-MurNAc-pentapeptide from UDP-MurNAc-pentapeptide onto the lipid carrier undecaprenyl phosphate, yielding undecaprenyl-pyrophosphoryl-MurNAc-pentapeptide, known as lipid I. The protein is Phospho-N-acetylmuramoyl-pentapeptide-transferase of Chlorobium chlorochromatii (strain CaD3).